The sequence spans 405 residues: Arginine biosynthesis bifunctional protein ArgJ (405 aa).

The substrate site is built by threonine 155, lysine 181, threonine 192, glutamate 278, asparagine 400, and threonine 405. Residue threonine 192 is the Nucleophile of the active site.

Belongs to the ArgJ family. In terms of assembly, heterotetramer of two alpha and two beta chains.

Its subcellular location is the cytoplasm. The catalysed reaction is N(2)-acetyl-L-ornithine + L-glutamate = N-acetyl-L-glutamate + L-ornithine. It catalyses the reaction L-glutamate + acetyl-CoA = N-acetyl-L-glutamate + CoA + H(+). Its pathway is amino-acid biosynthesis; L-arginine biosynthesis; L-ornithine and N-acetyl-L-glutamate from L-glutamate and N(2)-acetyl-L-ornithine (cyclic): step 1/1. It participates in amino-acid biosynthesis; L-arginine biosynthesis; N(2)-acetyl-L-ornithine from L-glutamate: step 1/4. Its function is as follows. Catalyzes two activities which are involved in the cyclic version of arginine biosynthesis: the synthesis of N-acetylglutamate from glutamate and acetyl-CoA as the acetyl donor, and of ornithine by transacetylation between N(2)-acetylornithine and glutamate. The sequence is that of Arginine biosynthesis bifunctional protein ArgJ from Dehalococcoides mccartyi (strain CBDB1).